We begin with the raw amino-acid sequence, 183 residues long: Translation initiation factor IF-3 (183 aa).

This sequence belongs to the IF-3 family. Monomer.

The protein resides in the cytoplasm. Functionally, IF-3 binds to the 30S ribosomal subunit and shifts the equilibrium between 70S ribosomes and their 50S and 30S subunits in favor of the free subunits, thus enhancing the availability of 30S subunits on which protein synthesis initiation begins. This chain is Translation initiation factor IF-3, found in Pseudomonas aeruginosa (strain ATCC 15692 / DSM 22644 / CIP 104116 / JCM 14847 / LMG 12228 / 1C / PRS 101 / PAO1).